Consider the following 493-residue polypeptide: Glutamyl-tRNA(Gln) amidotransferase subunit A (493 aa).

Residues K78 and S158 each act as charge relay system in the active site. S182 acts as the Acyl-ester intermediate in catalysis.

Belongs to the amidase family. GatA subfamily. As to quaternary structure, heterotrimer of A, B and C subunits.

The enzyme catalyses L-glutamyl-tRNA(Gln) + L-glutamine + ATP + H2O = L-glutaminyl-tRNA(Gln) + L-glutamate + ADP + phosphate + H(+). Functionally, allows the formation of correctly charged Gln-tRNA(Gln) through the transamidation of misacylated Glu-tRNA(Gln) in organisms which lack glutaminyl-tRNA synthetase. The reaction takes place in the presence of glutamine and ATP through an activated gamma-phospho-Glu-tRNA(Gln). The protein is Glutamyl-tRNA(Gln) amidotransferase subunit A of Rickettsia conorii (strain ATCC VR-613 / Malish 7).